The following is a 326-amino-acid chain: uncharacterized protein (326 aa).

It to B.subtilis XkdQ.

This is an uncharacterized protein from Bacillus subtilis (strain 168).